The primary structure comprises 302 residues: MRLIFMGSPDFSVPVLEALHAHHEVVCVYCQPPRPAGRGKKDRPTPVQTRAEELGLPVRHPTSLRTPEAQAEFAALGAEAAVVVAYGLILPQPILDAPERGCLNIHASLLPRWRGAAPIHRAILAGDAETGICIMQMEAGLDTGPVLMCEKTHIGPEETVQDLHDRLSDMGARLILGALGALDDLVPCPQPDAGVTYAEKIAKAEAGIDWTRPAAEIDRQIRGLSPFPGAWTLLNGERVKLLRCRQAEGQGAPGAVLPGLTIACGTGAVEITLAQREGKRPMEPEEFLRGFPLPEGSRAHTA.

108 to 111 (SLLP) is a binding site for (6S)-5,6,7,8-tetrahydrofolate. The segment covering 276 to 288 (REGKRPMEPEEFL) has biased composition (basic and acidic residues). The segment at 276–302 (REGKRPMEPEEFLRGFPLPEGSRAHTA) is disordered.

Belongs to the Fmt family.

The catalysed reaction is L-methionyl-tRNA(fMet) + (6R)-10-formyltetrahydrofolate = N-formyl-L-methionyl-tRNA(fMet) + (6S)-5,6,7,8-tetrahydrofolate + H(+). In terms of biological role, attaches a formyl group to the free amino group of methionyl-tRNA(fMet). The formyl group appears to play a dual role in the initiator identity of N-formylmethionyl-tRNA by promoting its recognition by IF2 and preventing the misappropriation of this tRNA by the elongation apparatus. In Cereibacter sphaeroides (strain KD131 / KCTC 12085) (Rhodobacter sphaeroides), this protein is Methionyl-tRNA formyltransferase.